The following is a 277-amino-acid chain: F41 fimbrial protein (277 aa).

An N-terminal signal peptide occupies residues 1-22; it reads MKKTLIALAVAASAAVSGSVMA.

This sequence belongs to the fimbrial K88 protein family.

It is found in the fimbrium. Fimbriae (also called pili), polar filaments radiating from the surface of the bacterium to a length of 0.5-1.5 micrometers and numbering 100-300 per cell, enable bacteria to colonize the epithelium of specific host organs. In Escherichia coli, this protein is F41 fimbrial protein (FimF41a).